We begin with the raw amino-acid sequence, 406 residues long: Bifunctional enzyme IspD/IspF (406 aa).

Residues 1–247 (MSLIRVNGEA…ALFFNPAKDT (247 aa)) are 2-C-methyl-D-erythritol 4-phosphate cytidylyltransferase. Positions 248–406 (FIGMGFDTHA…HVSMRYKQKL (159 aa)) are 2-C-methyl-D-erythritol 2,4-cyclodiphosphate synthase. A divalent metal cation-binding residues include aspartate 254 and histidine 256. 4-CDP-2-C-methyl-D-erythritol 2-phosphate contacts are provided by residues 254–256 (DTH) and 280–281 (HS). Histidine 288 provides a ligand contact to a divalent metal cation. 4-CDP-2-C-methyl-D-erythritol 2-phosphate contacts are provided by residues 302–304 (DIG), 307–311 (FPDND), 378–381 (TTME), phenylalanine 385, and lysine 388.

This sequence in the N-terminal section; belongs to the IspD/TarI cytidylyltransferase family. IspD subfamily. In the C-terminal section; belongs to the IspF family. The cofactor is a divalent metal cation.

It catalyses the reaction 2-C-methyl-D-erythritol 4-phosphate + CTP + H(+) = 4-CDP-2-C-methyl-D-erythritol + diphosphate. The enzyme catalyses 4-CDP-2-C-methyl-D-erythritol 2-phosphate = 2-C-methyl-D-erythritol 2,4-cyclic diphosphate + CMP. It functions in the pathway isoprenoid biosynthesis; isopentenyl diphosphate biosynthesis via DXP pathway; isopentenyl diphosphate from 1-deoxy-D-xylulose 5-phosphate: step 2/6. It participates in isoprenoid biosynthesis; isopentenyl diphosphate biosynthesis via DXP pathway; isopentenyl diphosphate from 1-deoxy-D-xylulose 5-phosphate: step 4/6. Bifunctional enzyme that catalyzes the formation of 4-diphosphocytidyl-2-C-methyl-D-erythritol from CTP and 2-C-methyl-D-erythritol 4-phosphate (MEP) (IspD), and catalyzes the conversion of 4-diphosphocytidyl-2-C-methyl-D-erythritol 2-phosphate (CDP-ME2P) to 2-C-methyl-D-erythritol 2,4-cyclodiphosphate (ME-CPP) with a corresponding release of cytidine 5-monophosphate (CMP) (IspF). The protein is Bifunctional enzyme IspD/IspF of Helicobacter pylori (strain P12).